The primary structure comprises 79 residues: Morintide mO2 (79 aa).

An N-terminal signal peptide occupies residues 1–20; that stretch reads MAKLSFLSLFLLCLVATATA. The 43-residue stretch at 21-63 folds into the Chitin-binding type-1 domain; that stretch reads QNCGRQAGNRACANGLCCSQYGFCGSTSEYCSRANGCQSNCRG. Intrachain disulfides connect C23-C38, C32-C44, C37-C51, and C57-C61. A propeptide spanning residues 64 to 79 is cleaved from the precursor; it reads GGGAGGAGGGAGGGSP.

In terms of tissue distribution, leaves (at protein level).

Its function is as follows. Chitin-binding protein which functions in defense against chitin-containing fungal pathogens. This Moringa oleifera (Horseradish tree) protein is Morintide mO2.